The sequence spans 235 residues: Pyridoxine 5'-phosphate synthase (235 aa).

Asn-6 serves as a coordination point for 3-amino-2-oxopropyl phosphate. 8 to 9 (DH) lines the 1-deoxy-D-xylulose 5-phosphate pocket. Arg-17 serves as a coordination point for 3-amino-2-oxopropyl phosphate. Catalysis depends on His-42, which acts as the Proton acceptor. Residues Arg-44 and His-49 each contribute to the 1-deoxy-D-xylulose 5-phosphate site. Glu-69 serves as the catalytic Proton acceptor. Thr-99 provides a ligand contact to 1-deoxy-D-xylulose 5-phosphate. His-189 acts as the Proton donor in catalysis. 3-amino-2-oxopropyl phosphate-binding positions include Gly-190 and 211–212 (GH).

It belongs to the PNP synthase family. In terms of assembly, homooctamer; tetramer of dimers.

It is found in the cytoplasm. The enzyme catalyses 3-amino-2-oxopropyl phosphate + 1-deoxy-D-xylulose 5-phosphate = pyridoxine 5'-phosphate + phosphate + 2 H2O + H(+). Its pathway is cofactor biosynthesis; pyridoxine 5'-phosphate biosynthesis; pyridoxine 5'-phosphate from D-erythrose 4-phosphate: step 5/5. In terms of biological role, catalyzes the complicated ring closure reaction between the two acyclic compounds 1-deoxy-D-xylulose-5-phosphate (DXP) and 3-amino-2-oxopropyl phosphate (1-amino-acetone-3-phosphate or AAP) to form pyridoxine 5'-phosphate (PNP) and inorganic phosphate. The protein is Pyridoxine 5'-phosphate synthase of Chlorobium luteolum (strain DSM 273 / BCRC 81028 / 2530) (Pelodictyon luteolum).